The chain runs to 64 residues: Large ribosomal subunit protein bL35 (64 aa).

Residues 1-25 form a disordered region; it reads MPKLKTHSGAAKRFKKTATGKVKRS.

This sequence belongs to the bacterial ribosomal protein bL35 family.

In Koribacter versatilis (strain Ellin345), this protein is Large ribosomal subunit protein bL35.